Reading from the N-terminus, the 534-residue chain is Monolignol oxidoreductase AtBBE-like 13 (534 aa).

Positions 1 to 29 (MAFVLMNNTNAFLVTLLLLSLSYIPLSFS) are cleaved as a signal peptide. N-linked (GlcNAc...) asparagine glycans are attached at residues Asn7 and Asn59. A disulfide bond links Cys38 and Cys102. The segment at residues 117–181 (HDYEGLSYVS…KIHGFPAGLC (65 aa)) is a cross-link (6-(S-cysteinyl)-8alpha-(pros-histidyl)-FAD (His-Cys)).

The protein belongs to the oxygen-dependent FAD-linked oxidoreductase family. Requires FAD as cofactor. Post-translationally, the FAD cofactor is bound via a bicovalent 6-S-cysteinyl, 8alpha-N1-histidyl FAD linkage.

Its subcellular location is the secreted. The protein localises to the cell wall. The catalysed reaction is (E)-4-coumaroyl alcohol + A = (E)-4-coumaraldehyde + AH2. The enzyme catalyses (E)-coniferol + A = (E)-coniferaldehyde + AH2. It catalyses the reaction (E)-sinapyl alcohol + A = (E)-sinapaldehyde + AH2. Its pathway is phenylpropanoid metabolism. In terms of biological role, mediates oxidation of p-hydroxylated derivatives of cinnamyl alcohol (i.e. the monolignols p-coumaryl-, coniferyl-, and sinapyl alcohol) to their corresponding aldehydes. The electron acceptor required for these reactions is not known, but does not seem to be dioxygen. Is much less efficient towards cinnamyl alcohol. The chain is Monolignol oxidoreductase AtBBE-like 13 from Arabidopsis thaliana (Mouse-ear cress).